Consider the following 483-residue polypeptide: Acyl-coenzyme A thioesterase 2, mitochondrial (483 aa).

Position 104 is an N6-acetyllysine (lysine 104). Catalysis depends on charge relay system residues serine 294, aspartate 388, and histidine 422. At lysine 470 the chain carries N6-succinyllysine. Positions 481–483 (SKV) match the Microbody targeting signal motif.

This sequence belongs to the C/M/P thioester hydrolase family. In terms of assembly, monomer. In terms of tissue distribution, strongest expression in heart, liver, muscle and kidney. Weak in placenta and pancreas.

The protein localises to the mitochondrion. It catalyses the reaction hexadecanoyl-CoA + H2O = hexadecanoate + CoA + H(+). It carries out the reaction tetradecanoyl-CoA + H2O = tetradecanoate + CoA + H(+). The enzyme catalyses octadecanoyl-CoA + H2O = octadecanoate + CoA + H(+). The catalysed reaction is eicosanoyl-CoA + H2O = eicosanoate + CoA + H(+). It catalyses the reaction decanoyl-CoA + H2O = decanoate + CoA + H(+). It carries out the reaction dodecanoyl-CoA + H2O = dodecanoate + CoA + H(+). The enzyme catalyses (9Z)-octadecenoyl-CoA + H2O = (9Z)-octadecenoate + CoA + H(+). The catalysed reaction is (9Z)-hexadecenoyl-CoA + H2O = (9Z)-hexadecenoate + CoA + H(+). It catalyses the reaction (9E)-octadecenoyl-CoA + H2O = (9E)-octadecenoate + CoA + H(+). It carries out the reaction (9Z,12Z)-octadecadienoyl-CoA + H2O = (9Z,12Z)-octadecadienoate + CoA + H(+). It participates in lipid metabolism; fatty acid metabolism. In terms of biological role, catalyzes the hydrolysis of acyl-CoAs into free fatty acids and coenzyme A (CoASH), regulating their respective intracellular levels. Displays higher activity toward long chain acyl CoAs (C14-C20). The enzyme is involved in enhancing the hepatic fatty acid oxidation in mitochondria. This chain is Acyl-coenzyme A thioesterase 2, mitochondrial (ACOT2), found in Homo sapiens (Human).